Here is a 433-residue protein sequence, read N- to C-terminus: Serine--tRNA ligase (433 aa).

An L-serine-binding site is contributed by 235–237 (TSE). 266–268 (RSE) is a binding site for ATP. Glutamate 289 lines the L-serine pocket. 353–356 (EISS) provides a ligand contact to ATP. Serine 388 lines the L-serine pocket.

The protein belongs to the class-II aminoacyl-tRNA synthetase family. Type-1 seryl-tRNA synthetase subfamily. As to quaternary structure, homodimer. The tRNA molecule binds across the dimer.

It is found in the cytoplasm. It catalyses the reaction tRNA(Ser) + L-serine + ATP = L-seryl-tRNA(Ser) + AMP + diphosphate + H(+). The enzyme catalyses tRNA(Sec) + L-serine + ATP = L-seryl-tRNA(Sec) + AMP + diphosphate + H(+). It participates in aminoacyl-tRNA biosynthesis; selenocysteinyl-tRNA(Sec) biosynthesis; L-seryl-tRNA(Sec) from L-serine and tRNA(Sec): step 1/1. In terms of biological role, catalyzes the attachment of serine to tRNA(Ser). Is also able to aminoacylate tRNA(Sec) with serine, to form the misacylated tRNA L-seryl-tRNA(Sec), which will be further converted into selenocysteinyl-tRNA(Sec). The sequence is that of Serine--tRNA ligase from Burkholderia ambifaria (strain ATCC BAA-244 / DSM 16087 / CCUG 44356 / LMG 19182 / AMMD) (Burkholderia cepacia (strain AMMD)).